The chain runs to 425 residues: Serine--tRNA ligase (425 aa).

228–230 lines the L-serine pocket; sequence TSE. 259 to 261 provides a ligand contact to ATP; the sequence is RSE. E282 contributes to the L-serine binding site. Residue 346–349 participates in ATP binding; it reads EISS. S384 provides a ligand contact to L-serine.

It belongs to the class-II aminoacyl-tRNA synthetase family. Type-1 seryl-tRNA synthetase subfamily. As to quaternary structure, homodimer. The tRNA molecule binds across the dimer.

The protein localises to the cytoplasm. It carries out the reaction tRNA(Ser) + L-serine + ATP = L-seryl-tRNA(Ser) + AMP + diphosphate + H(+). The catalysed reaction is tRNA(Sec) + L-serine + ATP = L-seryl-tRNA(Sec) + AMP + diphosphate + H(+). The protein operates within aminoacyl-tRNA biosynthesis; selenocysteinyl-tRNA(Sec) biosynthesis; L-seryl-tRNA(Sec) from L-serine and tRNA(Sec): step 1/1. In terms of biological role, catalyzes the attachment of serine to tRNA(Ser). Is also able to aminoacylate tRNA(Sec) with serine, to form the misacylated tRNA L-seryl-tRNA(Sec), which will be further converted into selenocysteinyl-tRNA(Sec). In Ehrlichia ruminantium (strain Gardel), this protein is Serine--tRNA ligase.